The chain runs to 163 residues: General stress protein 16O (163 aa).

The span at 19 to 30 shows a compositional bias: basic and acidic residues; sequence QKELSGEKKETE. Disordered regions lie at residues 19–55 and 115–163; these read QKEL…TLVT and ADVE…QDSK. The dksA C4-type; degenerate zinc finger occupies 89-123; that stretch reads CEKTGQEIPYERLEAVPYARMTVEAQADVEDDLET. A compositionally biased stretch (basic and acidic residues) spans 127–146; that stretch reads SYEREFHEQVKDLSNKETID.

The sequence is that of General stress protein 16O (yocK) from Bacillus subtilis (strain 168).